Consider the following 346-residue polypeptide: Phosphoribosylformylglycinamidine cyclo-ligase (346 aa).

It belongs to the AIR synthase family.

The protein resides in the cytoplasm. The enzyme catalyses 2-formamido-N(1)-(5-O-phospho-beta-D-ribosyl)acetamidine + ATP = 5-amino-1-(5-phospho-beta-D-ribosyl)imidazole + ADP + phosphate + H(+). It participates in purine metabolism; IMP biosynthesis via de novo pathway; 5-amino-1-(5-phospho-D-ribosyl)imidazole from N(2)-formyl-N(1)-(5-phospho-D-ribosyl)glycinamide: step 2/2. In Bacillus cereus (strain AH187), this protein is Phosphoribosylformylglycinamidine cyclo-ligase.